The chain runs to 372 residues: Anhydro-N-acetylmuramic acid kinase (372 aa).

An ATP-binding site is contributed by 21–28 (GTSMDGVD).

This sequence belongs to the anhydro-N-acetylmuramic acid kinase family.

It carries out the reaction 1,6-anhydro-N-acetyl-beta-muramate + ATP + H2O = N-acetyl-D-muramate 6-phosphate + ADP + H(+). It functions in the pathway amino-sugar metabolism; 1,6-anhydro-N-acetylmuramate degradation. The protein operates within cell wall biogenesis; peptidoglycan recycling. Its function is as follows. Catalyzes the specific phosphorylation of 1,6-anhydro-N-acetylmuramic acid (anhMurNAc) with the simultaneous cleavage of the 1,6-anhydro ring, generating MurNAc-6-P. Is required for the utilization of anhMurNAc either imported from the medium or derived from its own cell wall murein, and thus plays a role in cell wall recycling. This chain is Anhydro-N-acetylmuramic acid kinase, found in Bordetella avium (strain 197N).